Reading from the N-terminus, the 701-residue chain is Elongation factor G (701 aa).

The 283-residue stretch at 8-290 (ERYRNIGISA…AVVDYLPAPT (283 aa)) folds into the tr-type G domain. GTP is bound by residues 17–24 (AHIDAGKT), 88–92 (DTPGH), and 142–145 (NKMD).

It belongs to the TRAFAC class translation factor GTPase superfamily. Classic translation factor GTPase family. EF-G/EF-2 subfamily.

The protein localises to the cytoplasm. Catalyzes the GTP-dependent ribosomal translocation step during translation elongation. During this step, the ribosome changes from the pre-translocational (PRE) to the post-translocational (POST) state as the newly formed A-site-bound peptidyl-tRNA and P-site-bound deacylated tRNA move to the P and E sites, respectively. Catalyzes the coordinated movement of the two tRNA molecules, the mRNA and conformational changes in the ribosome. This chain is Elongation factor G, found in Aeromonas hydrophila subsp. hydrophila (strain ATCC 7966 / DSM 30187 / BCRC 13018 / CCUG 14551 / JCM 1027 / KCTC 2358 / NCIMB 9240 / NCTC 8049).